Here is a 302-residue protein sequence, read N- to C-terminus: Gigasin-6 (302 aa).

The first 22 residues, 1–22 (MSSRNLLYSSVVLFLVLFYCHG), serve as a signal peptide directing secretion. Residues 75–95 (ITTDTLFGLGGISALFANILI) form a helical membrane-spanning segment.

As to expression, component of the organic matrix of calcified shell layers.

The protein resides in the membrane. The polypeptide is Gigasin-6 (Magallana gigas (Pacific oyster)).